The following is a 1088-amino-acid chain: DNA polymerase delta catalytic subunit (1088 aa).

This sequence belongs to the DNA polymerase type-B family. In terms of assembly, heterodimer with subunits of 125 kDa and 50 kDa. The 125 kDa subunit contains the polymerase active site and most likely the active site for the 3'-5' exonuclease activity.

It localises to the nucleus. The catalysed reaction is DNA(n) + a 2'-deoxyribonucleoside 5'-triphosphate = DNA(n+1) + diphosphate. Its function is as follows. This polymerase possesses two enzymatic activities: DNA synthesis (polymerase) and an exonucleolytic activity that degrades single-stranded DNA in the 3'- to 5'-direction. The polypeptide is DNA polymerase delta catalytic subunit (POLD1) (Glycine max (Soybean)).